Reading from the N-terminus, the 1221-residue chain is RNA exonuclease 1 homolog (1221 aa).

Residues 37–46 (RGSGAPGDGG) show a composition bias toward gly residues. The segment at 37–75 (RGSGAPGDGGEAPPAAGLGYDPYNPELPKPPAQRENGTL) is disordered. The stretch at 86–115 (LELELVNQAIEAVRSEVELEQRRYRELLET) forms a coiled coil. The interval 116–598 (TREHRSAEAP…STSSAGADVD (483 aa)) is disordered. Arg-191 bears the Omega-N-methylarginine mark. 3 positions are modified to phosphoserine: Ser-287, Ser-289, and Ser-358. Over residues 357–369 (ASPAQVQSSQDGG) the composition is skewed to low complexity. Basic and acidic residues predominate over residues 393 to 417 (AQGKDKTKDKGRGRPVEKPRADKKG). Phosphoserine occurs at positions 459, 499, and 526. Residues 492-501 (LVERKARSLD) show a composition bias toward basic and acidic residues. Residues 498 to 577 (RSLDEGASQD…KRLKASPPPS (80 aa)) are interaction with ELOA. The span at 580 to 593 (PSSSSSSSSSTSSA) shows a compositional bias: low complexity. At Ser-610 the chain carries Phosphoserine. Disordered regions lie at residues 619-692 (IFNE…TAQE) and 735-775 (HIPN…TRTL). Over residues 627–648 (KTEDRGRLARQPPKEEKSEEKG) the composition is skewed to basic and acidic residues. Ser-914 is subject to Phosphoserine. Positions 1060–1209 (IYALDCEMSY…EDAGACMHLV (150 aa)) constitute an Exonuclease domain.

This sequence belongs to the REXO1/REXO3 family. In terms of assembly, interacts with TCEA2 and ELOA. In terms of tissue distribution, ubiquitously expressed.

It localises to the nucleus. In terms of biological role, seems to have no detectable effect on transcription elongation in vitro. This chain is RNA exonuclease 1 homolog (REXO1), found in Homo sapiens (Human).